The chain runs to 290 residues: F-box protein PP2-A13 (290 aa).

One can recognise an F-box domain in the interval 21–67; it reads RKLRLVDLPENCVALIMTRLDPPEICRLARLNRMFRRASSADFIWES.

In terms of assembly, part of a SCF (ASK-cullin-F-box) protein ligase complex. Interacts with SKP1A/ASK1, SKP1B/ASK2, ASK5, ASK11 and ASK13.

It localises to the nucleus. The protein operates within protein modification; protein ubiquitination. Component of SCF(ASK-cullin-F-box) E3 ubiquitin ligase complexes, which may mediate the ubiquitination and subsequent proteasomal degradation of target proteins. In Arabidopsis thaliana (Mouse-ear cress), this protein is F-box protein PP2-A13 (PP2A13).